The sequence spans 320 residues: Fructose-1,6-bisphosphatase class 1 (320 aa).

Residues glutamate 93, aspartate 114, leucine 116, and aspartate 117 each coordinate Mg(2+). Substrate-binding positions include 117-120 (DGSS), tyrosine 225, and lysine 256. Glutamate 262 contacts Mg(2+).

It belongs to the FBPase class 1 family. As to quaternary structure, homotetramer. Requires Mg(2+) as cofactor.

It localises to the cytoplasm. The catalysed reaction is beta-D-fructose 1,6-bisphosphate + H2O = beta-D-fructose 6-phosphate + phosphate. Its pathway is carbohydrate biosynthesis; gluconeogenesis. The chain is Fructose-1,6-bisphosphatase class 1 from Syntrophotalea carbinolica (strain DSM 2380 / NBRC 103641 / GraBd1) (Pelobacter carbinolicus).